The following is a 436-amino-acid chain: UPF0761 membrane protein Bxeno_A3061 (436 aa).

The next 6 helical transmembrane spans lie at 42 to 62, 96 to 116, 136 to 156, 180 to 200, 210 to 230, and 241 to 261; these read LVPLATVAFALFTAFPIFASF, GLTTIGMIFLFVTAVMTMMTV, ILVYWAIITLGPILIGVSLSI, ALAGAALPLTAAAFTILYVYL, AVIGGVTAAIAFELAKRGFGY, and VYGAFAAVPLFLLWMYLCWFI.

This sequence belongs to the UPF0761 family.

It is found in the cell inner membrane. The chain is UPF0761 membrane protein Bxeno_A3061 from Paraburkholderia xenovorans (strain LB400).